An 80-amino-acid chain; its full sequence is Defensin-like protein 18 (80 aa).

Residues 1–29 (MAKFCTTITLILVALVLFADFEAPTIVKA) form the signal peptide. Cystine bridges form between cysteine 32/cysteine 80, cysteine 43/cysteine 64, cysteine 49/cysteine 74, and cysteine 53/cysteine 76.

It belongs to the DEFL family.

It is found in the secreted. Its function is as follows. Confers broad-spectrum resistance to pathogens. The sequence is that of Defensin-like protein 18 (PDF1.5) from Arabidopsis thaliana (Mouse-ear cress).